Consider the following 271-residue polypeptide: Undecaprenyl-diphosphatase (271 aa).

Transmembrane regions (helical) follow at residues 5–25, 45–65, 86–106, 114–134, 149–169, 189–209, 226–246, and 251–271; these read YALFVAFVLGIVEGLTEFLPV, AATFEVVIQMGSILAVVAVFW, TLSLVHIILGMLPAVIIGLAI, LFGPQTVMYALVAGGILLIIA, ISYKQALGIGLFQCLALWPGF, AAEFSFILAVPMMVAASGLDL, VGFITAFVVAMIAIKTFLALI, and FIPFAIYRFVVAFAVYLVFVA.

Belongs to the UppP family.

It localises to the cell inner membrane. It catalyses the reaction di-trans,octa-cis-undecaprenyl diphosphate + H2O = di-trans,octa-cis-undecaprenyl phosphate + phosphate + H(+). In terms of biological role, catalyzes the dephosphorylation of undecaprenyl diphosphate (UPP). Confers resistance to bacitracin. This is Undecaprenyl-diphosphatase from Aeromonas hydrophila subsp. hydrophila (strain ATCC 7966 / DSM 30187 / BCRC 13018 / CCUG 14551 / JCM 1027 / KCTC 2358 / NCIMB 9240 / NCTC 8049).